A 298-amino-acid chain; its full sequence is MSLKLDGKKLSLEIEERLNDYIFINKKIAKRAPGLAVIRIGEDPASGVYVNNKEKACSRVGIKSFIFHLKDNVEQKEVEQLINKLNFDKNIDGMLLQLPIPKKFDEQRLISYINPSKDVDGLNEINIGKLVKNEPAMRSCTPAGIINLLRSQNITIEGKKIVVIGRSLLVGKPLSLMLLNLNGTVTMTHSKTLDLNKVCKEADILIAAAGKPNLIDSSFVKEGAVIIDVGIHRLKSSDKNKTRLCGDVLLEDVIPKVLAYTPVPGGVGPMTVTMLLVNTIFSWQKQFGLSSTLNDLLP.

NADP(+) is bound by residues 165-167 (GRS), serine 190, and isoleucine 231.

Belongs to the tetrahydrofolate dehydrogenase/cyclohydrolase family. In terms of assembly, homodimer.

It carries out the reaction (6R)-5,10-methylene-5,6,7,8-tetrahydrofolate + NADP(+) = (6R)-5,10-methenyltetrahydrofolate + NADPH. The enzyme catalyses (6R)-5,10-methenyltetrahydrofolate + H2O = (6R)-10-formyltetrahydrofolate + H(+). The protein operates within one-carbon metabolism; tetrahydrofolate interconversion. Its function is as follows. Catalyzes the oxidation of 5,10-methylenetetrahydrofolate to 5,10-methenyltetrahydrofolate and then the hydrolysis of 5,10-methenyltetrahydrofolate to 10-formyltetrahydrofolate. This Prochlorococcus marinus (strain MIT 9312) protein is Bifunctional protein FolD.